The following is a 554-amino-acid chain: Methyl-coenzyme M reductase II subunit alpha (554 aa).

Gln151 contributes to the coenzyme F430 binding site. Residues Arg229, 260–261 (KH), and Arg274 contribute to the coenzyme B site. Positions 336 and 447 each coordinate coenzyme M.

The protein belongs to the methyl-coenzyme M reductase alpha subunit family. MCR is a hexamer of two alpha, two beta, and two gamma chains, forming a dimer of heterotrimers. It depends on coenzyme F430 as a cofactor.

It carries out the reaction coenzyme B + methyl-coenzyme M = methane + coenzyme M-coenzyme B heterodisulfide. It participates in one-carbon metabolism; methyl-coenzyme M reduction; methane from methyl-coenzyme M: step 1/1. Component of the methyl-coenzyme M reductase (MCR) I that catalyzes the reductive cleavage of methyl-coenzyme M (CoM-S-CH3 or 2-(methylthio)ethanesulfonate) using coenzyme B (CoB or 7-mercaptoheptanoylthreonine phosphate) as reductant which results in the production of methane and the mixed heterodisulfide of CoB and CoM (CoM-S-S-CoB). This is the final step in methanogenesis. The sequence is that of Methyl-coenzyme M reductase II subunit alpha (mrtA) from Methanothermus fervidus (strain ATCC 43054 / DSM 2088 / JCM 10308 / V24 S).